Here is an 87-residue protein sequence, read N- to C-terminus: uncharacterized protein (87 aa).

A helical membrane pass occupies residues Ile-29–Pro-49.

It localises to the membrane. This is an uncharacterized protein from Methanocaldococcus jannaschii (strain ATCC 43067 / DSM 2661 / JAL-1 / JCM 10045 / NBRC 100440) (Methanococcus jannaschii).